The sequence spans 431 residues: Adenylosuccinate synthetase (431 aa).

GTP-binding positions include 21–27 (GDEGKGK) and 49–51 (GHT). Aspartate 22 (proton acceptor) is an active-site residue. Mg(2+)-binding residues include aspartate 22 and glycine 49. Residues 22-25 (DEGK), 47-50 (NAGH), threonine 138, arginine 152, asparagine 230, threonine 245, and arginine 309 each bind IMP. Histidine 50 serves as the catalytic Proton donor. A substrate-binding site is contributed by 305 to 311 (ATTGRPR). GTP is bound by residues arginine 311, 337–339 (KLD), and 419–421 (GNG).

It belongs to the adenylosuccinate synthetase family. As to quaternary structure, homodimer. Mg(2+) is required as a cofactor.

It localises to the cytoplasm. The catalysed reaction is IMP + L-aspartate + GTP = N(6)-(1,2-dicarboxyethyl)-AMP + GDP + phosphate + 2 H(+). It functions in the pathway purine metabolism; AMP biosynthesis via de novo pathway; AMP from IMP: step 1/2. Plays an important role in the de novo pathway and in the salvage pathway of purine nucleotide biosynthesis. Catalyzes the first committed step in the biosynthesis of AMP from IMP. The sequence is that of Adenylosuccinate synthetase from Paramecium tetraurelia.